A 574-amino-acid chain; its full sequence is Septation ring formation regulator EzrA (574 aa).

The Extracellular segment spans residues 1–7 (MSSGIIL). A helical transmembrane segment spans residues 8–26 (LIVAIVLLVIIAYLVGVII). The Cytoplasmic segment spans residues 27–574 (RKRNDSLITS…YEKTREHIRF (548 aa)). Coiled coils occupy residues 102-141 (NFIRAKHEINSVESQLNLVEEDIASIREALNILKEQEEKN), 274-350 (ELVT…ETES), and 459-520 (QLEA…SFEA).

Belongs to the EzrA family.

It is found in the cell membrane. In terms of biological role, negative regulator of FtsZ ring formation; modulates the frequency and position of FtsZ ring formation. Inhibits FtsZ ring formation at polar sites. Interacts either with FtsZ or with one of its binding partners to promote depolymerization. The protein is Septation ring formation regulator EzrA of Streptococcus pyogenes serotype M4 (strain MGAS10750).